Here is a 269-residue protein sequence, read N- to C-terminus: MNVLRTQKYWVNQFAINFACRNTYVNPMFLRYFHCAVPRAISQRALKPMDIPFLQCYIEPIDNTSFFLHPFKKIRFWWRYLFYGWWNLKKNQFLIKRTFPDRDFSIAEIIQNALKLHSGVNKALANHDLQQLEELCTLRTAQILKQQALNQPKCIWKLEKHISKPKLLNLSRAQADLKGEEFFVQAVVRLHTLQSLRTDKGSPKIEKPDIENVVIQQRSWTSPIRWQLWGSVPSTPVNTVRKTLPDGQVTFVAKPSKKSFLKQLFSGKE.

This is an uncharacterized protein from Schizosaccharomyces pombe (strain 972 / ATCC 24843) (Fission yeast).